Reading from the N-terminus, the 722-residue chain is Endoglucanase F (722 aa).

An N-terminal signal peptide occupies residues 1 to 29 (MSKNFKRVGAVAVAAAMSLSIMATTSINA). Residues 142-165 (PEFQDPSKYPSPLDTSQPVGRDPI) are disordered. A compositionally biased stretch (polar residues) spans 154-165 (LDTSQPVGRDPI). One can recognise a Dockerin domain in the interval 661 to 722 (PEKLLGDVNG…LLKKALLSIQ (62 aa)).

Belongs to the glycosyl hydrolase 48 (cellulase L) family.

It catalyses the reaction Endohydrolysis of (1-&gt;4)-beta-D-glucosidic linkages in cellulose, lichenin and cereal beta-D-glucans.. Its function is as follows. Probable endoglucanase involved in the degradation of cellulose or related beta-glucans. In Ruminiclostridium cellulolyticum (strain ATCC 35319 / DSM 5812 / JCM 6584 / H10) (Clostridium cellulolyticum), this protein is Endoglucanase F (celCCF).